The following is a 452-amino-acid chain: tRNA modification GTPase MnmE (452 aa).

(6S)-5-formyl-5,6,7,8-tetrahydrofolate contacts are provided by Arg25, Glu82, and Arg125. Residues 221–374 form the TrmE-type G domain; the sequence is GLHVVLAGKP…LRARLLALAG (154 aa). A K(+)-binding site is contributed by Asn231. Residues 231-236, 250-256, 275-278, and 355-357 each bind GTP; these read NVGKSS, TPIAGTT, DTAG, and SAR. A Mg(2+)-binding site is contributed by Ser235. Residues Thr250, Ile252, and Thr255 each coordinate K(+). Thr256 provides a ligand contact to Mg(2+). Lys452 provides a ligand contact to (6S)-5-formyl-5,6,7,8-tetrahydrofolate.

This sequence belongs to the TRAFAC class TrmE-Era-EngA-EngB-Septin-like GTPase superfamily. TrmE GTPase family. In terms of assembly, homodimer. Heterotetramer of two MnmE and two MnmG subunits. The cofactor is K(+).

The protein resides in the cytoplasm. Functionally, exhibits a very high intrinsic GTPase hydrolysis rate. Involved in the addition of a carboxymethylaminomethyl (cmnm) group at the wobble position (U34) of certain tRNAs, forming tRNA-cmnm(5)s(2)U34. This chain is tRNA modification GTPase MnmE, found in Bordetella petrii (strain ATCC BAA-461 / DSM 12804 / CCUG 43448).